Reading from the N-terminus, the 313-residue chain is Probable GTP 3',8-cyclase (313 aa).

The Radical SAM core domain occupies 4–224 (VYGRELEDLR…EIRNKHKRPR (221 aa)). Arg-13 contributes to the GTP binding site. [4Fe-4S] cluster is bound by residues Cys-20, Cys-24, and Cys-27. Lys-60 lines the GTP pocket. Gly-64 is an S-adenosyl-L-methionine binding site. Thr-90 is a GTP binding site. S-adenosyl-L-methionine is bound at residue Ser-114. Residue Lys-151 coordinates GTP. 2 residues coordinate [4Fe-4S] cluster: Cys-244 and Cys-247. 249-251 (RIR) contacts GTP. [4Fe-4S] cluster is bound at residue Cys-261.

Belongs to the radical SAM superfamily. MoaA family. [4Fe-4S] cluster is required as a cofactor.

The catalysed reaction is GTP + AH2 + S-adenosyl-L-methionine = (8S)-3',8-cyclo-7,8-dihydroguanosine 5'-triphosphate + 5'-deoxyadenosine + L-methionine + A + H(+). It functions in the pathway cofactor biosynthesis; molybdopterin biosynthesis. Functionally, catalyzes the cyclization of GTP to (8S)-3',8-cyclo-7,8-dihydroguanosine 5'-triphosphate. The chain is Probable GTP 3',8-cyclase from Sulfolobus acidocaldarius (strain ATCC 33909 / DSM 639 / JCM 8929 / NBRC 15157 / NCIMB 11770).